Consider the following 156-residue polypeptide: Small ribosomal subunit protein uS7 (156 aa).

Belongs to the universal ribosomal protein uS7 family. In terms of assembly, part of the 30S ribosomal subunit. Contacts proteins S9 and S11.

In terms of biological role, one of the primary rRNA binding proteins, it binds directly to 16S rRNA where it nucleates assembly of the head domain of the 30S subunit. Is located at the subunit interface close to the decoding center, probably blocks exit of the E-site tRNA. The chain is Small ribosomal subunit protein uS7 from Staphylococcus aureus (strain bovine RF122 / ET3-1).